The primary structure comprises 306 residues: C-type lectin domain family 10 member A (306 aa).

Topologically, residues 1–37 (MTMAYENFQNLGSEEKNQEAGKAPPQSFLCNILSWTH) are cytoplasmic. A helical; Signal-anchor for type II membrane protein membrane pass occupies residues 38–58 (LLLFSLGLSLLLLVVISVIGS). Topologically, residues 59-306 (QNSQLRRDLE…VCEMKLAKDS (248 aa)) are extracellular. N76 and N168 each carry an N-linked (GlcNAc...) asparagine glycan. Residues 174–300 (CCPLHWMEHE…QRPYRWVCEM (127 aa)) enclose the C-type lectin domain. 3 disulfides stabilise this stretch: C175/C186, C203/C298, and C276/C290.

Homooligomer.

The protein resides in the membrane. Functionally, recognizes terminal galactose and N-acetylgalactosamine units. In Rattus norvegicus (Rat), this protein is C-type lectin domain family 10 member A (Clec10a).